A 122-amino-acid polypeptide reads, in one-letter code: Large ribosomal subunit protein uL14 (122 aa).

The protein belongs to the universal ribosomal protein uL14 family. As to quaternary structure, part of the 50S ribosomal subunit. Forms a cluster with proteins L3 and L19. In the 70S ribosome, L14 and L19 interact and together make contacts with the 16S rRNA in bridges B5 and B8.

In terms of biological role, binds to 23S rRNA. Forms part of two intersubunit bridges in the 70S ribosome. The chain is Large ribosomal subunit protein uL14 from Ruegeria pomeroyi (strain ATCC 700808 / DSM 15171 / DSS-3) (Silicibacter pomeroyi).